Consider the following 2392-residue polypeptide: Protein Ycf2 (2392 aa).

Residue glycine 1658–serine 1665 participates in ATP binding.

This sequence belongs to the Ycf2 family.

It localises to the plastid. It is found in the chloroplast stroma. Functionally, probable ATPase of unknown function. Its presence in a non-photosynthetic plant (Epifagus virginiana) and experiments in tobacco indicate that it has an essential function which is probably not related to photosynthesis. The sequence is that of Protein Ycf2 from Anthoceros angustus (Hornwort).